Here is a 273-residue protein sequence, read N- to C-terminus: Ribosomal RNA small subunit methyltransferase A (273 aa).

S-adenosyl-L-methionine-binding residues include Asn18, Leu20, Gly45, Glu66, Asp91, and Asn113.

The protein belongs to the class I-like SAM-binding methyltransferase superfamily. rRNA adenine N(6)-methyltransferase family. RsmA subfamily.

It is found in the cytoplasm. The catalysed reaction is adenosine(1518)/adenosine(1519) in 16S rRNA + 4 S-adenosyl-L-methionine = N(6)-dimethyladenosine(1518)/N(6)-dimethyladenosine(1519) in 16S rRNA + 4 S-adenosyl-L-homocysteine + 4 H(+). Specifically dimethylates two adjacent adenosines (A1518 and A1519) in the loop of a conserved hairpin near the 3'-end of 16S rRNA in the 30S particle. May play a critical role in biogenesis of 30S subunits. This chain is Ribosomal RNA small subunit methyltransferase A, found in Klebsiella pneumoniae (strain 342).